The chain runs to 190 residues: Ribosome hibernation promotion factor (190 aa).

This sequence belongs to the HPF/YfiA ribosome-associated protein family. Long HPF subfamily. Interacts with 100S ribosomes.

It is found in the cytoplasm. Required for dimerization of active 70S ribosomes into 100S ribosomes in stationary phase; 100S ribosomes are translationally inactive and sometimes present during exponential growth. This chain is Ribosome hibernation promotion factor, found in Rhizobium meliloti (strain 1021) (Ensifer meliloti).